The chain runs to 483 residues: Homoserine O-acetyltransferase (483 aa).

One can recognise an AB hydrolase-1 domain in the interval 47-346 (NVILICHALT…HFGHDAFLLE (300 aa)). S152 serves as the catalytic Nucleophile. Position 221 (R221) interacts with substrate. Residues D307 and H340 contribute to the active site. D341 is a substrate binding site. 2 consecutive CBS domains span residues 367-423 (MSED…KISS) and 428-483 (LSRD…KGTK).

The protein belongs to the AB hydrolase superfamily. MetX family. As to quaternary structure, homodimer.

It is found in the cytoplasm. The enzyme catalyses L-homoserine + acetyl-CoA = O-acetyl-L-homoserine + CoA. Its pathway is amino-acid biosynthesis; L-methionine biosynthesis via de novo pathway; O-acetyl-L-homoserine from L-homoserine: step 1/1. Its function is as follows. Transfers an acetyl group from acetyl-CoA to L-homoserine, forming acetyl-L-homoserine. The chain is Homoserine O-acetyltransferase from Methanohalophilus mahii (strain ATCC 35705 / DSM 5219 / SLP).